Consider the following 457-residue polypeptide: Elongation factor 1-alpha (457 aa).

Gly2 bears the N,N,N-trimethylglycine mark. Residue Lys3 is modified to N6,N6-dimethyllysine; alternate. The residue at position 3 (Lys3) is an N6-methyllysine; alternate. Positions 5 to 240 (KTHVNVVVIG…DAIEPPVRPS (236 aa)) constitute a tr-type G domain. Residues 14-21 (GHVDSGKS) are G1. 14 to 21 (GHVDSGKS) is a GTP binding site. An N6-methyllysine modification is found at Lys30. The segment at 70–74 (GITID) is G2. Position 79 is an N6,N6,N6-trimethyllysine (Lys79). Residues 91–94 (DAPG) are G3. GTP-binding positions include 91-95 (DAPGH) and 153-156 (NKMD). The segment at 153 to 156 (NKMD) is G4. A G5 region spans residues 192–194 (SGW). Lys316 is subject to N6,N6-dimethyllysine; alternate. Lys316 carries the N6-methyllysine; alternate modification. Lys389 carries the post-translational modification N6-methyllysine.

The protein belongs to the TRAFAC class translation factor GTPase superfamily. Classic translation factor GTPase family. EF-Tu/EF-1A subfamily.

Its subcellular location is the cytoplasm. Its function is as follows. This protein promotes the GTP-dependent binding of aminoacyl-tRNA to the A-site of ribosomes during protein biosynthesis. The polypeptide is Elongation factor 1-alpha (TEF-3) (Mucor circinelloides f. lusitanicus (Mucor racemosus var. lusitanicus)).